We begin with the raw amino-acid sequence, 133 residues long: Ribosome-binding factor A (133 aa).

Belongs to the RbfA family. As to quaternary structure, monomer. Binds 30S ribosomal subunits, but not 50S ribosomal subunits or 70S ribosomes.

The protein localises to the cytoplasm. Functionally, one of several proteins that assist in the late maturation steps of the functional core of the 30S ribosomal subunit. Associates with free 30S ribosomal subunits (but not with 30S subunits that are part of 70S ribosomes or polysomes). Required for efficient processing of 16S rRNA. May interact with the 5'-terminal helix region of 16S rRNA. The chain is Ribosome-binding factor A from Alteromonas mediterranea (strain DSM 17117 / CIP 110805 / LMG 28347 / Deep ecotype).